The sequence spans 427 residues: Glutamate-1-semialdehyde 2,1-aminomutase (427 aa).

K265 is subject to N6-(pyridoxal phosphate)lysine.

It belongs to the class-III pyridoxal-phosphate-dependent aminotransferase family. HemL subfamily. As to quaternary structure, homodimer. Pyridoxal 5'-phosphate serves as cofactor.

Its subcellular location is the cytoplasm. The catalysed reaction is (S)-4-amino-5-oxopentanoate = 5-aminolevulinate. The protein operates within porphyrin-containing compound metabolism; protoporphyrin-IX biosynthesis; 5-aminolevulinate from L-glutamyl-tRNA(Glu): step 2/2. The chain is Glutamate-1-semialdehyde 2,1-aminomutase from Bordetella petrii (strain ATCC BAA-461 / DSM 12804 / CCUG 43448).